The following is a 571-amino-acid chain: Phosphoribosylaminoimidazole carboxylase (571 aa).

Serine 37 bears the Phosphoserine mark. The ATP-grasp domain maps to 110–298 (KEHLIKNGIA…QFEAHLRSIL (189 aa)). An ATP-binding site is contributed by 138 to 193 (GRDLGFPFVLKSRTLAYDGRGNFVVKNKEMIPEALEVLKDRPLYAEKWAPFTKELA).

The protein in the C-terminal section; belongs to the AIR carboxylase family. Class I subfamily.

It carries out the reaction 5-amino-1-(5-phospho-D-ribosyl)imidazole-4-carboxylate + H(+) = 5-amino-1-(5-phospho-beta-D-ribosyl)imidazole + CO2. It participates in purine metabolism; IMP biosynthesis via de novo pathway; 5-amino-1-(5-phospho-D-ribosyl)imidazole-4-carboxylate from 5-amino-1-(5-phospho-D-ribosyl)imidazole (carboxylase route): step 1/1. This chain is Phosphoribosylaminoimidazole carboxylase (ADE2), found in Saccharomyces cerevisiae (strain ATCC 204508 / S288c) (Baker's yeast).